The sequence spans 158 residues: Crossover junction endodeoxyribonuclease RuvC (158 aa).

Catalysis depends on residues D7, E66, and D139. 3 residues coordinate Mg(2+): D7, E66, and D139.

This sequence belongs to the RuvC family. In terms of assembly, homodimer which binds Holliday junction (HJ) DNA. The HJ becomes 2-fold symmetrical on binding to RuvC with unstacked arms; it has a different conformation from HJ DNA in complex with RuvA. In the full resolvosome a probable DNA-RuvA(4)-RuvB(12)-RuvC(2) complex forms which resolves the HJ. Mg(2+) is required as a cofactor.

It localises to the cytoplasm. The catalysed reaction is Endonucleolytic cleavage at a junction such as a reciprocal single-stranded crossover between two homologous DNA duplexes (Holliday junction).. In terms of biological role, the RuvA-RuvB-RuvC complex processes Holliday junction (HJ) DNA during genetic recombination and DNA repair. Endonuclease that resolves HJ intermediates. Cleaves cruciform DNA by making single-stranded nicks across the HJ at symmetrical positions within the homologous arms, yielding a 5'-phosphate and a 3'-hydroxyl group; requires a central core of homology in the junction. The consensus cleavage sequence is 5'-(A/T)TT(C/G)-3'. Cleavage occurs on the 3'-side of the TT dinucleotide at the point of strand exchange. HJ branch migration catalyzed by RuvA-RuvB allows RuvC to scan DNA until it finds its consensus sequence, where it cleaves and resolves the cruciform DNA. The sequence is that of Crossover junction endodeoxyribonuclease RuvC from Campylobacter hominis (strain ATCC BAA-381 / DSM 21671 / CCUG 45161 / LMG 19568 / NCTC 13146 / CH001A).